Consider the following 463-residue polypeptide: Asparagine--tRNA ligase (463 aa).

The protein belongs to the class-II aminoacyl-tRNA synthetase family. In terms of assembly, homodimer.

The protein localises to the cytoplasm. It carries out the reaction tRNA(Asn) + L-asparagine + ATP = L-asparaginyl-tRNA(Asn) + AMP + diphosphate + H(+). This is Asparagine--tRNA ligase from Clostridium botulinum (strain Langeland / NCTC 10281 / Type F).